The chain runs to 151 residues: Deoxyuridine 5'-triphosphate nucleotidohydrolase (151 aa).

Substrate-binding positions include 70-72, Asn83, 87-89, and Met97; these read RSG and LID.

This sequence belongs to the dUTPase family. Mg(2+) serves as cofactor.

It catalyses the reaction dUTP + H2O = dUMP + diphosphate + H(+). It participates in pyrimidine metabolism; dUMP biosynthesis; dUMP from dCTP (dUTP route): step 2/2. This enzyme is involved in nucleotide metabolism: it produces dUMP, the immediate precursor of thymidine nucleotides and it decreases the intracellular concentration of dUTP so that uracil cannot be incorporated into DNA. In Yersinia enterocolitica serotype O:8 / biotype 1B (strain NCTC 13174 / 8081), this protein is Deoxyuridine 5'-triphosphate nucleotidohydrolase.